Reading from the N-terminus, the 353-residue chain is Photosystem II D2 protein (353 aa).

At T2 the chain carries N-acetylthreonine. At T2 the chain carries Phosphothreonine. The helical transmembrane segment at 41 to 61 (CAYFALGGWLTGTTFVTSWYT) threads the bilayer. Residue H118 participates in chlorophyll a binding. A helical transmembrane segment spans residues 125–141 (GFMLRQFEIARSVGLRP). Positions 130 and 143 each coordinate pheophytin a. A helical transmembrane segment spans residues 153 to 166 (VFVSVFLIYPLGQS). H198 is a chlorophyll a binding site. The helical transmembrane segment at 208 to 228 (AALLCAIHGATVENTIFEDGD) threads the bilayer. 2 residues coordinate a plastoquinone: H215 and F262. H215 contacts Fe cation. A Fe cation-binding site is contributed by H269. Residues 279 to 295 (GLWMSAIGVVGLALNLR) form a helical membrane-spanning segment.

It belongs to the reaction center PufL/M/PsbA/D family. PSII is composed of 1 copy each of membrane proteins PsbA, PsbB, PsbC, PsbD, PsbE, PsbF, PsbH, PsbI, PsbJ, PsbK, PsbL, PsbM, PsbT, PsbX, PsbY, PsbZ, Psb30/Ycf12, at least 3 peripheral proteins of the oxygen-evolving complex and a large number of cofactors. It forms dimeric complexes. It depends on The D1/D2 heterodimer binds P680, chlorophylls that are the primary electron donor of PSII, and subsequent electron acceptors. It shares a non-heme iron and each subunit binds pheophytin, quinone, additional chlorophylls, carotenoids and lipids. There is also a Cl(-1) ion associated with D1 and D2, which is required for oxygen evolution. The PSII complex binds additional chlorophylls, carotenoids and specific lipids. as a cofactor.

Its subcellular location is the plastid. The protein localises to the chloroplast thylakoid membrane. The enzyme catalyses 2 a plastoquinone + 4 hnu + 2 H2O = 2 a plastoquinol + O2. In terms of biological role, photosystem II (PSII) is a light-driven water:plastoquinone oxidoreductase that uses light energy to abstract electrons from H(2)O, generating O(2) and a proton gradient subsequently used for ATP formation. It consists of a core antenna complex that captures photons, and an electron transfer chain that converts photonic excitation into a charge separation. The D1/D2 (PsbA/PsbD) reaction center heterodimer binds P680, the primary electron donor of PSII as well as several subsequent electron acceptors. D2 is needed for assembly of a stable PSII complex. This Staurastrum punctulatum (Green alga) protein is Photosystem II D2 protein.